The primary structure comprises 443 residues: Fatty acid desaturase 3 (443 aa).

Over 1–130 (MGGVGEPDWE…EDMKLFEAKP (130 aa)) the chain is Cytoplasmic. Residues 18-95 (LPTLRWEQVR…LQPLLIGELA (78 aa)) form the Cytochrome b5 heme-binding domain. Residues 131-151 (AFFGLLLGHILAMEVLAWLMI) form a helical membrane-spanning segment. Position 152 (Y152) is a topological domain, lumenal. A helical membrane pass occupies residues 153 to 173 (MLGPGWVPSTLAALILAISQA). The Cytoplasmic portion of the chain corresponds to 174–259 (QSWCLQHDLG…KKKRRYLPYN (86 aa)). A Histidine box-1 motif is present at residues 180–184 (HDLGH). The short motif at 217–221 (HFQHH) is the Histidine box-2 element. The helical transmembrane segment at 260 to 280 (HQHLYFFLIGPPLLTLVNFEV) threads the bilayer. Residues 281 to 282 (EN) lie on the Lumenal side of the membrane. Residues 283–303 (LAYMLVCMQWMDLLWAASFYA) form a helical membrane-spanning segment. Residue R304 is a topological domain, cytoplasmic. A helical membrane pass occupies residues 305–325 (FLLSYIPFYGIPGALLLFVAV). Residues 326–443 (RVLESHWFVW…NVWLEAYLHQ (118 aa)) are Lumenal-facing. The Histidine box-3 signature appears at 381–385 (QIEHH).

Belongs to the fatty acid desaturase type 1 family.

The protein localises to the endoplasmic reticulum membrane. The catalysed reaction is an N-acylsphing-4-enine + 2 Fe(II)-[cytochrome b5] + O2 + 2 H(+) = an N-acyl-sphinga-4E,14Z-dienine + 2 Fe(III)-[cytochrome b5] + 2 H2O. It carries out the reaction N-(hexanoyl)sphing-4-enine + 2 Fe(II)-[cytochrome b5] + O2 + 2 H(+) = N-hexanoyl-sphinga-4E,14Z-dienine + 2 Fe(III)-[cytochrome b5] + 2 H2O. The enzyme catalyses sphing-4-enine + 2 Fe(II)-[cytochrome b5] + O2 + 2 H(+) = sphinga-4E,14Z-dienine + 2 Fe(III)-[cytochrome b5] + 2 H2O. It catalyses the reaction (11E)-octadecenoyl-CoA + 2 Fe(II)-[cytochrome b5] + O2 + 2 H(+) = (11E,13Z)-octadecadienoyl-CoA + 2 Fe(III)-[cytochrome b5] + 2 H2O. The catalysed reaction is N-acyl-1-deoxysphinganine + 2 Fe(II)-[cytochrome b5] + O2 + 2 H(+) = N-acyl-1-deoxysphing-14Z-enine + 2 Fe(III)-[cytochrome b5] + 2 H2O. It carries out the reaction an N-acylsphinganine + 2 Fe(II)-[cytochrome b5] + O2 + 2 H(+) = an N-acylsphing-14Z-enine + 2 Fe(III)-[cytochrome b5] + 2 H2O. Its pathway is lipid metabolism; polyunsaturated fatty acid biosynthesis. It participates in lipid metabolism; sphingolipid metabolism. Mammals have different sphingoid bases that differ in their length and/or pattern of desaturation and hydroxyl groups. The predominant sphingoid base that comprises mammalian ceramides is sphing-4-enine (sphingosine or SPH) which has a trans (E) desaturation at carbon 4. FADS3 is a desaturase that introduces a cis (Z) double bond between carbon 14 and carbon 15 of the sphingoid base (also known as long chain base, LCB), producing LCBs such as sphinga-4,14-dienine (SPD, d18:2(4E,14Z)) from SPH. Prefers SPH-containing ceramides (N-acylsphing-4-enines) as substrates. Capable of metabolizing also the SPH in its free form. SPD ceramides occur widely in mammalian tissues and cells. Due to their unusual structure containing a cis double bond, SPD ceramides may have an opposite, negative role in lipid microdomain formation relative to conventional ceramides. Could be involved in the detoxification of 1-deoxy sphingolipids, by desaturating the cytotoxic 1-deoxysphinganine (1-deoxySA, m18:0), produced under pathological conditions, to 1-deoxysphingenine (1-deoxysphingosine, 1-deoxySO, m18:1). Although prefers SPH-containing ceramides (N-acylsphing-4-enines) as substrates, it also exhibits activity toward dihydrosphingosine-containing CERs (N-acylsphinganines) and produces 14Z-SPH-containing sphingolipids. Its desaturase mechanism involves an electron transfer facilitated by cytochrome b5. FADS3 also acts as a methyl-end fatty acyl coenzyme A (CoA) desaturase that introduces a cis double bond between the preexisting double bond and the terminal methyl group of the fatty acyl chain. Desaturates (11E)-octadecenoate (trans-vaccenoate, the predominant trans fatty acid in human milk) at carbon 13 to generate (11E,13Z)-octadecadienoate (also known as conjugated linoleic acid 11E,13Z-CLA). The sequence is that of Fatty acid desaturase 3 from Bos taurus (Bovine).